The following is a 1082-amino-acid chain: Protein argonaute 1A (1082 aa).

Disordered regions lie at residues 17–148 (MMRK…ASQD) and 187–208 (GQSP…VRFP). Positions 29 to 38 (GESSGTQQAT) are enriched in polar residues. Positions 72-100 (GRGGGQHQGRGGRYQGRGGPTSHQPGGGP) are enriched in gly residues. The region spanning 420-533 (PVIDFVAQLL…LPMEVCKIVE (114 aa)) is the PAZ domain. Positions 709-1030 (LLIAILPDNN…AAFRARFYME (322 aa)) constitute a Piwi domain. The disordered stretch occupies residues 1036-1065 (SGSMASGAHTRGGGPLPGARSTKPAGNVAV).

This sequence belongs to the argonaute family. Ago subfamily.

In terms of biological role, probably involved in the RNA silencing pathway. May bind to short RNAs such as microRNAs (miRNAs) or short interfering RNAs (siRNAs), and represses the translation of mRNAs which are complementary to them. This is Protein argonaute 1A (AGO1A) from Oryza sativa subsp. japonica (Rice).